Consider the following 543-residue polypeptide: ATP synthase subunit alpha (543 aa).

174 to 181 (GDRQTGKT) contacts ATP. The disordered stretch occupies residues 521-543 (VEKKPDVDKAAPVDQEKIVAGEK).

This sequence belongs to the ATPase alpha/beta chains family. F-type ATPases have 2 components, CF(1) - the catalytic core - and CF(0) - the membrane proton channel. CF(1) has five subunits: alpha(3), beta(3), gamma(1), delta(1), epsilon(1). CF(0) has three main subunits: a(1), b(2) and c(9-12). The alpha and beta chains form an alternating ring which encloses part of the gamma chain. CF(1) is attached to CF(0) by a central stalk formed by the gamma and epsilon chains, while a peripheral stalk is formed by the delta and b chains.

The protein localises to the cell membrane. It catalyses the reaction ATP + H2O + 4 H(+)(in) = ADP + phosphate + 5 H(+)(out). Its function is as follows. Produces ATP from ADP in the presence of a proton gradient across the membrane. The alpha chain is a regulatory subunit. The chain is ATP synthase subunit alpha from Bifidobacterium longum (strain DJO10A).